A 170-amino-acid polypeptide reads, in one-letter code: uncharacterized protein (170 aa).

The region spanning 25-151 is the VOC domain; the sequence is PALSPHLVVD…FGHHWSLGQP (127 aa).

This is an uncharacterized protein from Mycobacterium tuberculosis (strain CDC 1551 / Oshkosh).